Consider the following 558-residue polypeptide: Podocalyxin (558 aa).

A signal peptide spans 1-22; the sequence is MRCALALSALLLLLSTPPLLPS. Residues 20–29 show a composition bias toward pro residues; sequence LPSSPSPSPS. 3 disordered regions span residues 20–50, 83–210, and 270–338; these read LPSS…PTPA, LGVS…DHLM, and SVIS…VAHE. Residues 23–461 lie on the Extracellular side of the membrane; the sequence is SPSPSPSPSQ…EEAEDRFSMP (439 aa). Polar residues-rich tracts occupy residues 32–50 and 83–107; these read QNAT…PTPA and LGVS…NTTV. N-linked (GlcNAc...) asparagine glycosylation is found at asparagine 33, asparagine 43, and asparagine 104. Low complexity predominate over residues 125–142; that stretch reads STKSADTTTVATSTATAK. Polar residues-rich tracts occupy residues 143-173, 190-204, and 270-302; these read PNTT…LTST, RQPT…PTSS, and SVIS…TSPA. N-linked (GlcNAc...) asparagine glycosylation occurs at asparagine 144. Residues 313-324 are compositionally biased toward low complexity; it reads TMSSSPTAASTT. An N-linked (GlcNAc...) asparagine glycan is attached at asparagine 360. The chain crosses the membrane as a helical span at residues 462 to 482; the sequence is LIITIVCMASFLLLVAALYGC. Over 483-558 the chain is Cytoplasmic; the sequence is CHQRLSQRKD…DLDEEEDTHL (76 aa). Position 518 is a phosphothreonine (threonine 518). Phosphoserine occurs at positions 529 and 537. Residue threonine 556 is modified to Phosphothreonine.

It belongs to the podocalyxin family. In terms of assembly, monomer; when associated with the membrane raft. Oligomer; when integrated in the apical membrane. Interacts (via the C-terminal PDZ-binding motif DTHL) with NHERF1 (via the PDZ domains); the interaction is not detected in glomerular epithelium cells, take place early in the secretory pathway and is necessary for its apical membrane sorting. Found in a complex with EZR, PODXL and NHERF2. Associates with the actin cytoskeleton through complex formation with EZR and NHERF2. Interacts (via the C-terminal PDZ-binding motif DTHL) with NHERF2 (via the PDZ 1 domain); interaction is detected in glomerular epithelium cells. Interacts with EZR. N- and O-linked glycosylated. Sialoglycoprotein. Glomerular epithelium cell (podocyte).

The protein resides in the apical cell membrane. It is found in the cell projection. The protein localises to the lamellipodium. Its subcellular location is the filopodium. It localises to the ruffle. The protein resides in the microvillus. It is found in the membrane raft. The protein localises to the membrane. Involved in the regulation of both adhesion and cell morphology and cancer progression. Functions as an anti-adhesive molecule that maintains an open filtration pathway between neighboring foot processes in the podocyte by charge repulsion. Acts as a pro-adhesive molecule, enhancing the adherence of cells to immobilized ligands, increasing the rate of migration and cell-cell contacts in an integrin-dependent manner. Induces the formation of apical actin-dependent microvilli. Involved in the formation of a preapical plasma membrane subdomain to set up initial epithelial polarization and the apical lumen formation during renal tubulogenesis. Plays a role in cancer development and aggressiveness by inducing cell migration and invasion through its interaction with the actin-binding protein EZR. Affects EZR-dependent signaling events, leading to increased activities of the MAPK and PI3K pathways in cancer cells. The polypeptide is Podocalyxin (PODXL) (Homo sapiens (Human)).